Reading from the N-terminus, the 80-residue chain is MTMTIKEKTELQDQIDELQVEFNKLQNKYKHIKSLLDKKEREVNYLENEVKRLQNRGIIEILLEKLRKKKAIEGEVEYSR.

This is an uncharacterized protein from Methanothermobacter thermautotrophicus (Methanobacterium thermoformicicum).